We begin with the raw amino-acid sequence, 220 residues long: 2-hydroxy-3-keto-5-methylthiopentenyl-1-phosphate phosphatase (220 aa).

Belongs to the HAD-like hydrolase superfamily. MtnX family.

The catalysed reaction is 2-hydroxy-5-methylsulfanyl-3-oxopent-1-enyl phosphate + H2O = 1,2-dihydroxy-5-(methylsulfanyl)pent-1-en-3-one + phosphate. It functions in the pathway amino-acid biosynthesis; L-methionine biosynthesis via salvage pathway; L-methionine from S-methyl-5-thio-alpha-D-ribose 1-phosphate: step 4/6. Its function is as follows. Dephosphorylates 2-hydroxy-3-keto-5-methylthiopentenyl-1-phosphate (HK-MTPenyl-1-P) yielding 1,2-dihydroxy-3-keto-5-methylthiopentene (DHK-MTPene). This chain is 2-hydroxy-3-keto-5-methylthiopentenyl-1-phosphate phosphatase, found in Geobacillus thermodenitrificans (strain NG80-2).